We begin with the raw amino-acid sequence, 269 residues long: MATH domain and coiled-coil domain-containing protein At2g01790 (269 aa).

Residues 6-134 (AVKKLWVINN…NGEVDIVAEV (129 aa)) enclose the MATH domain. A coiled-coil region spans residues 228-269 (KLDWLEKKLKETGKSRLQEIEEDLKDLKVKCADMDALLEFLR).

This chain is MATH domain and coiled-coil domain-containing protein At2g01790, found in Arabidopsis thaliana (Mouse-ear cress).